A 627-amino-acid polypeptide reads, in one-letter code: Phosphomethylpyrimidine synthase (627 aa).

Residues asparagine 233, methionine 262, tyrosine 291, histidine 327, 347–349 (SRG), 388–391 (DGLR), and glutamate 427 each bind substrate. Histidine 431 provides a ligand contact to Zn(2+). Tyrosine 454 provides a ligand contact to substrate. Histidine 495 lines the Zn(2+) pocket. [4Fe-4S] cluster-binding residues include cysteine 575, cysteine 578, and cysteine 583.

It belongs to the ThiC family. As to quaternary structure, homodimer. Requires [4Fe-4S] cluster as cofactor.

The enzyme catalyses 5-amino-1-(5-phospho-beta-D-ribosyl)imidazole + S-adenosyl-L-methionine = 4-amino-2-methyl-5-(phosphooxymethyl)pyrimidine + CO + 5'-deoxyadenosine + formate + L-methionine + 3 H(+). It functions in the pathway cofactor biosynthesis; thiamine diphosphate biosynthesis. Catalyzes the synthesis of the hydroxymethylpyrimidine phosphate (HMP-P) moiety of thiamine from aminoimidazole ribotide (AIR) in a radical S-adenosyl-L-methionine (SAM)-dependent reaction. The protein is Phosphomethylpyrimidine synthase of Acidithiobacillus ferrooxidans (strain ATCC 23270 / DSM 14882 / CIP 104768 / NCIMB 8455) (Ferrobacillus ferrooxidans (strain ATCC 23270)).